We begin with the raw amino-acid sequence, 423 residues long: Protein CLP1 homolog (423 aa).

Residues Glu19, Lys60, and 122 to 127 each bind ATP; that span reads DVGKTT.

The protein belongs to the Clp1 family. Clp1 subfamily.

It localises to the nucleus. Its function is as follows. Required for endonucleolytic cleavage during polyadenylation-dependent pre-mRNA 3'-end formation. The chain is Protein CLP1 homolog (cbc) from Culex quinquefasciatus (Southern house mosquito).